The primary structure comprises 254 residues: uncharacterized protein (254 aa).

The interval 60–161 (PKSPTTTSIS…PEIPQAAPGT (102 aa)) is disordered. Composition is skewed to low complexity over residues 63–77 (PTTT…STTP) and 89–146 (TPIP…TTTS).

This is an uncharacterized protein from Caenorhabditis elegans.